A 97-amino-acid chain; its full sequence is Putative septation protein SpoVG (97 aa).

Belongs to the SpoVG family.

In terms of biological role, essential for sporulation. Interferes with or is a negative regulator of the pathway leading to asymmetric septation. This chain is Putative septation protein SpoVG, found in Bacillus velezensis (strain DSM 23117 / BGSC 10A6 / LMG 26770 / FZB42) (Bacillus amyloliquefaciens subsp. plantarum).